A 319-amino-acid chain; its full sequence is Bidirectional sugar transporter SWEET15 (319 aa).

Over 1 to 10 (MAFMSMERST) the chain is Extracellular. Residues 11 to 31 (WAFTFGILGNLISLMVFLSPL) traverse the membrane as a helical segment. Positions 13–99 (FTFGILGNLI…AMYLAYAPKS (87 aa)) constitute a MtN3/slv 1 domain. Topologically, residues 32–50 (PTFYRVYRKKSTEGFQSTP) are cytoplasmic. Residues 51-71 (YVVTLFSCMLWMYYAFVKSGA) form a helical membrane-spanning segment. Glu72 is a topological domain (extracellular). A helical transmembrane segment spans residues 73-93 (LLVTINGVGCVIETVYLAMYL). The Cytoplasmic segment spans residues 94–106 (AYAPKSARMLTAK). Residues 107–127 (MLLGLNIGLFGVIALVTLLLS) form a helical membrane-spanning segment. The Extracellular segment spans residues 128–134 (RGELRVH). The helical transmembrane segment at 135–155 (VLGWICVAVSLSVFAAPLSII) threads the bilayer. The region spanning 135–219 (VLGWICVAVS…ALYMAYRSKK (85 aa)) is the MtN3/slv 2 domain. Topologically, residues 156–167 (RLVIRTKSVEFM) are cytoplasmic. The helical transmembrane segment at 168–188 (PFSLSFFLVLSAVIWFLYGLL) threads the bilayer. Residues 189-191 (KKD) lie on the Extracellular side of the membrane. The chain crosses the membrane as a helical span at residues 192-212 (VFVALPNVLGFVFGVAQMALY). The Cytoplasmic portion of the chain corresponds to 213 to 319 (MAYRSKKPLV…KPDMAIVVEV (107 aa)).

The protein belongs to the SWEET sugar transporter family. In terms of assembly, forms homooligomers and/or heterooligomers.

The protein localises to the cell membrane. Functionally, mediates both low-affinity uptake and efflux of sugar across the plasma membrane. In terms of biological role, confers blight susceptibility. Confers TAL effector-mediated susceptibility to Xanthomonas oryzae pv. oryzae. The protein is Bidirectional sugar transporter SWEET15 (SWEET15) of Oryza sativa subsp. japonica (Rice).